Here is a 348-residue protein sequence, read N- to C-terminus: MNNYFPRLKQFSAPATFFLTVACLVYPGENAHANASTPNPYTVAQTTASPSVAVENLSGFQGIITALNITPDGKYLAVATADNQITLIDLANQEVVYSQRSPVNNFADLAISADGQWLAIAADNNVDVRRVRDGMRVETLVGHTDKVSGVAFSPDGETIVSVSGGDRTIRIWERASGNLIQTLADNLGPTTSVVFTPDGSQFITGAIGQDRTIKFWDANTFELLGTSPQQPGFINGLAVTPDGRKLVGAVRNFVKAWNLADAKELFSVRGPSLEINTIAVSPNNRWVATANKEGTIMIFDLANGKQVTTLRGHQGWVLSLAFSPDGNTLYSGAEDKTVKIWDLSALAR.

WD repeat units lie at residues 59 to 98, 142 to 182, 185 to 226, 229 to 267, 270 to 309, and 312 to 347; these read GFQGIITALNITPDGKYLAVATADNQITLIDLANQEVVYS, GHTD…LIQT, DNLG…LLGT, QQPGFINGLAVTPDGRKLVGAVRNFVKAWNLADAKELFS, GPSLEINTIAVSPNNRWVATANKEGTIMIFDLANGKQVTT, and GHQGWVLSLAFSPDGNTLYSGAEDKTVKIWDLSALA.

This is an uncharacterized protein from Synechocystis sp. (strain ATCC 27184 / PCC 6803 / Kazusa).